A 299-amino-acid chain; its full sequence is 4-diphosphocytidyl-2-C-methyl-D-erythritol kinase (299 aa).

Lys10 is an active-site residue. Position 96–106 (96–106) interacts with ATP; the sequence is PVAGGMAGGSA. Residue Asp138 is part of the active site.

This sequence belongs to the GHMP kinase family. IspE subfamily.

It catalyses the reaction 4-CDP-2-C-methyl-D-erythritol + ATP = 4-CDP-2-C-methyl-D-erythritol 2-phosphate + ADP + H(+). Its pathway is isoprenoid biosynthesis; isopentenyl diphosphate biosynthesis via DXP pathway; isopentenyl diphosphate from 1-deoxy-D-xylulose 5-phosphate: step 3/6. Catalyzes the phosphorylation of the position 2 hydroxy group of 4-diphosphocytidyl-2C-methyl-D-erythritol. The protein is 4-diphosphocytidyl-2-C-methyl-D-erythritol kinase of Streptomyces coelicolor (strain ATCC BAA-471 / A3(2) / M145).